A 338-amino-acid chain; its full sequence is Anthranilate phosphoribosyltransferase (338 aa).

5-phospho-alpha-D-ribose 1-diphosphate is bound by residues glycine 80, 83-84 (GD), threonine 88, 90-93 (NIST), 108-116 (KHGNRSVSS), and serine 120. Position 80 (glycine 80) interacts with anthranilate. Serine 92 is a binding site for Mg(2+). Asparagine 111 contributes to the anthranilate binding site. Arginine 166 is an anthranilate binding site. Residues aspartate 225 and glutamate 226 each contribute to the Mg(2+) site.

Belongs to the anthranilate phosphoribosyltransferase family. Homodimer. It depends on Mg(2+) as a cofactor.

It carries out the reaction N-(5-phospho-beta-D-ribosyl)anthranilate + diphosphate = 5-phospho-alpha-D-ribose 1-diphosphate + anthranilate. It functions in the pathway amino-acid biosynthesis; L-tryptophan biosynthesis; L-tryptophan from chorismate: step 2/5. Functionally, catalyzes the transfer of the phosphoribosyl group of 5-phosphorylribose-1-pyrophosphate (PRPP) to anthranilate to yield N-(5'-phosphoribosyl)-anthranilate (PRA). The chain is Anthranilate phosphoribosyltransferase from Desulfatibacillum aliphaticivorans.